The sequence spans 218 residues: MSHGDTIRVDASVRAKCGTGSARALRAAGLIPAVVYGKNRDAVNISLSHADFLKKCRTLPIFSQLIKLCIDGKEEFALTKEIQKHPVSGAVSHVDFQFVDRGAEIKVEVPLVFLNEQKCAGVKLGGALNILHRSLLIRCAPDAIPQSLEVDLLDLAIGHSIHVSDLALPETMQVAMKEENPVIASVSATAAVEEAKEDGAPEESAQGQGAAEAQETNK.

Residues 187–218 (SATAAVEEAKEDGAPEESAQGQGAAEAQETNK) form a disordered region. A compositionally biased stretch (low complexity) spans 202 to 218 (EESAQGQGAAEAQETNK).

Belongs to the bacterial ribosomal protein bL25 family. CTC subfamily. As to quaternary structure, part of the 50S ribosomal subunit; part of the 5S rRNA/L5/L18/L25 subcomplex. Contacts the 5S rRNA. Binds to the 5S rRNA independently of L5 and L18.

Functionally, this is one of the proteins that binds to the 5S RNA in the ribosome where it forms part of the central protuberance. The polypeptide is Large ribosomal subunit protein bL25 (Anaplasma marginale (strain St. Maries)).